Reading from the N-terminus, the 485-residue chain is MATNPLSILFVASEVEGLIKSGGLADVAKALPEALVNLQHDARIAIPAYTAIPNVCDDEVILDTHLETWPHTHYQVKKRFLGDNPVYLIACGHYFDRPSMYAENNQAYTDNGERFAFFSAACLDMLPKIGFQPDIVHANDWHTGLVPFLLKHRYGQDPFFAQTKSILSIHNAVFKGVFHYDEMQCLPEFHCRNVPDAAVSSTHMTMLKAGVMNADKINAVSPTYAEELKTELGSHGMAWEFQQRAGDLVGILNGCDYSAWHPDTDSYLPINYKATKQSMVRGKNGCKRALQEQVGLPVKDVAMFGMVCRLTHQKGVHYLLPVLTEFLKLDVQLVLVGTGDPLLAAQLRDVAAQFGEKFVFVEAYNNQLAHLVEAASDFFLMPSEFEPCGLNQIYSMAYGSLPIVRGVGGLKDSVCDYDVNPETATGFVFYEPTAQALLITMQRALLLYAQNLTELRRVQLYAMERDFCWNKAAEQYVELYRSALK.

K20 contributes to the ADP-alpha-D-glucose binding site.

This sequence belongs to the glycosyltransferase 1 family. Bacterial/plant glycogen synthase subfamily.

The enzyme catalyses [(1-&gt;4)-alpha-D-glucosyl](n) + ADP-alpha-D-glucose = [(1-&gt;4)-alpha-D-glucosyl](n+1) + ADP + H(+). It participates in glycan biosynthesis; glycogen biosynthesis. In terms of biological role, synthesizes alpha-1,4-glucan chains using ADP-glucose. This chain is Glycogen synthase, found in Vibrio vulnificus (strain YJ016).